The chain runs to 635 residues: 1-deoxy-D-xylulose-5-phosphate synthase (635 aa).

Thiamine diphosphate-binding positions include His72 and 113-115 (GHA). A Mg(2+)-binding site is contributed by Asp144. Residues 145–146 (GA), Asn174, Tyr287, and Glu370 each bind thiamine diphosphate. Asn174 is a binding site for Mg(2+).

This sequence belongs to the transketolase family. DXPS subfamily. In terms of assembly, homodimer. Mg(2+) is required as a cofactor. It depends on thiamine diphosphate as a cofactor.

It carries out the reaction D-glyceraldehyde 3-phosphate + pyruvate + H(+) = 1-deoxy-D-xylulose 5-phosphate + CO2. It participates in metabolic intermediate biosynthesis; 1-deoxy-D-xylulose 5-phosphate biosynthesis; 1-deoxy-D-xylulose 5-phosphate from D-glyceraldehyde 3-phosphate and pyruvate: step 1/1. Functionally, catalyzes the acyloin condensation reaction between C atoms 2 and 3 of pyruvate and glyceraldehyde 3-phosphate to yield 1-deoxy-D-xylulose-5-phosphate (DXP). This is 1-deoxy-D-xylulose-5-phosphate synthase from Trichodesmium erythraeum (strain IMS101).